Consider the following 346-residue polypeptide: KH domain-containing, RNA-binding, signal transduction-associated protein 3 (346 aa).

The segment at Met-1 to Asn-160 is involved in homodimerization. Lys-4 participates in a covalent cross-link: Glycyl lysine isopeptide (Lys-Gly) (interchain with G-Cter in SUMO2). The KH domain occupies Leu-61–Leu-127. The interval Arg-212–Pro-251 is interaction with SIAH1. A compositionally biased stretch (low complexity) spans Pro-213–Val-228. Disordered regions lie at residues Pro-213–Gly-267 and Gln-318–Tyr-346. The segment covering Gly-253–Thr-262 has biased composition (pro residues).

Belongs to the KHDRBS family. As to quaternary structure, self-associates to form homooligomers; dimerization increases RNA affinity. Interacts with KHDRBS2/SLM-1. Interacts with KHDRBS1/SAM68; heterooligomer formation of KHDRBS family proteins may modulate RNA substrate specificity. Interacts with the splicing regulatory proteins SFRS9, SAFB and YTHDC1. Interacts with HNRPL. Interacts with RBMX, RBMY1A1, p85 subunit of PI3-kinase, SERPINB5. Interacts with SIAH1 which promotes targeting for degradation. In terms of processing, phosphorylated on tyrosine residues. Isoform 1 C-terminal region is tyrosine-rich, but isoform 2 lacking this C-terminal region is also tyrosine-phosphorylated. As to expression, ubiquitous with higher expression in testis, skeletal muscle and brain. Expressed in the kidney only in podocytes, the glomerular epithelial cells of the kidney. Strongly expressed after meiosis.

The protein localises to the nucleus. In terms of biological role, RNA-binding protein that plays a role in the regulation of alternative splicing and influences mRNA splice site selection and exon inclusion. Binds preferentially to the 5'-[AU]UAAA-3' motif in vitro. Binds optimally to RNA containing 5'-[AU]UAA-3' as a bipartite motif spaced by more than 15 nucleotides. Binds poly(A). RNA-binding abilities are down-regulated by tyrosine kinase PTK6. Involved in splice site selection of vascular endothelial growth factor. In vitro regulates CD44 alternative splicing by direct binding to purine-rich exonic enhancer. Can regulate alternative splicing of neurexins NRXN1-3 in the laminin G-like domain 6 containing the evolutionary conserved neurexin alternative spliced segment 4 (AS4) involved in neurexin selective targeting to postsynaptic partners such as neuroligins and LRRTM family members. Targeted, cell-type specific splicing regulation of NRXN1 at AS4 is involved in neuronal glutamatergic synapse function and plasticity. May regulate expression of KHDRBS2/SLIM-1 in defined brain neuron populations by modifying its alternative splicing. Can bind FABP9 mRNA. May play a role as a negative regulator of cell growth. Inhibits cell proliferation. Its function is as follows. (Microbial infection) Involved in post-transcriptional regulation of HIV-1 gene expression. In Homo sapiens (Human), this protein is KH domain-containing, RNA-binding, signal transduction-associated protein 3 (KHDRBS3).